Consider the following 564-residue polypeptide: Rhodopsin kinase GRK1 (564 aa).

Residues 1 to 15 (MDFGSLETVVANSAF) are interaction with RCVRN. The tract at residues 1–189 (MDFGSLETVV…LEAQPIGEDW (189 aa)) is N-terminal. The residue at position 5 (Ser-5) is a Phosphoserine. Phosphothreonine is present on Thr-8. Position 21 is a phosphoserine; by PKA and autocatalysis (Ser-21). The RGS domain occupies 58–175 (FDNLCSEQPI…LGSLYFLRFL (118 aa)). The Protein kinase domain maps to 190–455 (FLDFRVLGKG…CDALRANVLF (266 aa)). ATP-binding positions include 196–204 (LGKGGFGEV) and Lys-219. Asp-317 (proton acceptor) is an active-site residue. Residues 456–521 (KDISWRQLEA…GNCSIPWQEE (66 aa)) form the AGC-kinase C-terminal domain. The tract at residues 456 to 564 (KDISWRQLEA…TAKSGMCLIS (109 aa)) is C-terminal. At Ser-491 the chain carries Phosphoserine; by autocatalysis. Thr-492 carries the phosphothreonine; by autocatalysis modification. Position 561 is a cysteine methyl ester (Cys-561). Cys-561 carries S-farnesyl cysteine lipidation. The propeptide at 562–564 (LIS) is removed in mature form.

The protein belongs to the protein kinase superfamily. AGC Ser/Thr protein kinase family. GPRK subfamily. In terms of assembly, interacts (via N-terminus) with RCVRN (via C-terminus); the interaction is Ca(2+)-dependent. Interacts (when prenylated) with PDE6D; this promotes release from membranes. May form a complex composed of RHO, GRK1 and RCVRN in a Ca(2+)-dependent manner; RCVRN prevents the interaction between GRK1 and RHO. Post-translationally, autophosphorylated, Ser-21 is a minor site of autophosphorylation compared to Ser-491 and Thr-492. Phosphorylation at Ser-21 is regulated by light and activated by cAMP. In terms of processing, farnesylation is required for full activity. In terms of tissue distribution, detected in retina (at protein level). Retina-specific. Expressed in rod and cone photoreceptor cells.

The protein localises to the membrane. Its subcellular location is the cell projection. The protein resides in the cilium. It localises to the photoreceptor outer segment. It carries out the reaction L-threonyl-[rhodopsin] + ATP = O-phospho-L-threonyl-[rhodopsin] + ADP + H(+). The enzyme catalyses L-seryl-[rhodopsin] + ATP = O-phospho-L-seryl-[rhodopsin] + ADP + H(+). Its activity is regulated as follows. Inhibited by RCVRN, which prevents the interaction between GRK1 and RHO. Inhibition is calcium-dependent. Its function is as follows. Retina-specific kinase involved in the signal turnoff via phosphorylation of rhodopsin (RHO), the G protein- coupled receptor that initiates the phototransduction cascade. This rapid desensitization is essential for scotopic vision and permits rapid adaptation to changes in illumination. May play a role in the maintenance of the outer nuclear layer in the retina. The polypeptide is Rhodopsin kinase GRK1 (Rattus norvegicus (Rat)).